The chain runs to 532 residues: Flavin-containing monooxygenase 3 (532 aa).

FAD-binding positions include 9-13 (GAGVS), Glu-32, 40-41 (LW), and 61-62 (NS). Residues 60-61 (SN) and 195-198 (SGCD) contribute to the NADP(+) site. Phosphoserine is present on Ser-401. The helical transmembrane segment at 510-530 (FFFHWLKLFAIPILLIAVFLV) threads the bilayer.

Belongs to the FMO family. FAD is required as a cofactor.

It is found in the microsome membrane. The protein localises to the endoplasmic reticulum membrane. It carries out the reaction trimethylamine + NADPH + O2 = trimethylamine N-oxide + NADP(+) + H2O. It catalyses the reaction N,N-dimethylaniline + NADPH + O2 + H(+) = N,N-dimethylaniline N-oxide + NADP(+) + H2O. The catalysed reaction is hypotaurine + NADPH + O2 + H(+) = taurine + NADP(+) + H2O. The enzyme catalyses (S)-nicotine + NADPH + O2 = trans-(S)-nicotine N(1')-oxide + NADP(+) + H2O. It carries out the reaction albendazole + NADPH + O2 + H(+) = albendazole S-oxide + NADP(+) + H2O. Functionally, essential hepatic enzyme that catalyzes the oxygenation of a wide variety of nitrogen- and sulfur-containing compounds including drugs as well as dietary compounds. Plays an important role in the metabolism of trimethylamine (TMA), via the production of trimethylamine N-oxide (TMAO) metabolite. TMA is generated by the action of gut microbiota using dietary precursors such as choline, choline containing compounds, betaine or L-carnitine. By regulating TMAO concentration, FMO3 directly impacts both platelet responsiveness and rate of thrombus formation. In Pan troglodytes (Chimpanzee), this protein is Flavin-containing monooxygenase 3 (FMO3).